The primary structure comprises 273 residues: Dermonecrotic toxin LsaSicTox-alphaIB1aiii (273 aa).

Histidine 5 is an active-site residue. 2 residues coordinate Mg(2+): glutamate 25 and aspartate 27. Histidine 41 acts as the Nucleophile in catalysis. 2 disulfides stabilise this stretch: cysteine 45-cysteine 51 and cysteine 47-cysteine 190. Mg(2+) is bound at residue aspartate 85.

Belongs to the arthropod phospholipase D family. Class II subfamily. Requires Mg(2+) as cofactor. As to expression, expressed by the venom gland.

It is found in the secreted. It carries out the reaction an N-(acyl)-sphingosylphosphocholine = an N-(acyl)-sphingosyl-1,3-cyclic phosphate + choline. It catalyses the reaction an N-(acyl)-sphingosylphosphoethanolamine = an N-(acyl)-sphingosyl-1,3-cyclic phosphate + ethanolamine. The catalysed reaction is a 1-acyl-sn-glycero-3-phosphocholine = a 1-acyl-sn-glycero-2,3-cyclic phosphate + choline. The enzyme catalyses a 1-acyl-sn-glycero-3-phosphoethanolamine = a 1-acyl-sn-glycero-2,3-cyclic phosphate + ethanolamine. In terms of biological role, dermonecrotic toxins cleave the phosphodiester linkage between the phosphate and headgroup of certain phospholipids (sphingolipid and lysolipid substrates), forming an alcohol (often choline) and a cyclic phosphate. This toxin acts on sphingomyelin (SM). It may also act on ceramide phosphoethanolamine (CPE), lysophosphatidylcholine (LPC) and lysophosphatidylethanolamine (LPE), but not on lysophosphatidylserine (LPS), and lysophosphatidylglycerol (LPG). It acts by transphosphatidylation, releasing exclusively cyclic phosphate products as second products. Induces dermonecrosis, hemolysis, increased vascular permeability, edema, inflammatory response, and platelet aggregation. The chain is Dermonecrotic toxin LsaSicTox-alphaIB1aiii from Loxosceles sabina (Tucson recluse spider).